A 406-amino-acid chain; its full sequence is 1H-pyrrole-2-carbonyl-[peptidyl-carrier protein] brominase (406 aa).

FAD contacts are provided by Ala17, Glu36, Arg42, His44, Ile45, Ser48, Arg101, Val124, Asp291, and Val304.

The protein belongs to the flavin-dependent halogenase family.

The catalysed reaction is (1H-pyrrole-2-carbonyl)-[peptidyl-carrier protein] + 3 bromide + 3 FADH2 + 3 O2 = (3,4,5-tribromo-1H-pyrrole-2-carbonyl)-[peptidyl-carrier protein] + 3 FAD + 6 H2O. It carries out the reaction (1H-pyrrole-2-carbonyl)-[peptidyl-carrier protein] + bromide + FADH2 + O2 = (5-bromo-1H-pyrrole-2-carbonyl)-[peptidyl-carrier protein] + FAD + 2 H2O. It catalyses the reaction (5-bromo-1H-pyrrole-2-carbonyl)-[peptidyl-carrier protein] + bromide + FADH2 + O2 = (4,5-dibromo-1H-pyrrole-2-carbonyl)-[peptidyl-carrier protein] + FAD + 2 H2O. The enzyme catalyses (4,5-dibromo-1H-pyrrole-2-carbonyl)-[peptidyl-carrier protein] + bromide + FADH2 + O2 = (3,4,5-tribromo-1H-pyrrole-2-carbonyl)-[peptidyl-carrier protein] + FAD + 2 H2O. In terms of biological role, brominase involved in the biosynthesis of polybrominated aromatic organic compounds. Catalyzes three successive rounds of bromination of pyrrolyl-S-Bmp1 to produce mono-, di- and tribromopyrrolyl-S-Bmp1. The sequence is that of 1H-pyrrole-2-carbonyl-[peptidyl-carrier protein] brominase from Pseudoalteromonas luteoviolacea (strain 2ta16).